The following is a 77-amino-acid chain: uncharacterized protein (77 aa).

The tract at residues 56–77 (SVIPKQQPPSSAAAISESEFED) is disordered. A compositionally biased stretch (low complexity) spans 65–77 (SSAAAISESEFED).

This is an uncharacterized protein from Frog virus 3 (isolate Goorha) (FV-3).